Reading from the N-terminus, the 179-residue chain is Ubiquitin-conjugating enzyme E2 C (179 aa).

A disordered region spans residues 1–31; sequence MASQNRDPVAASVAAARKGAEPSGGAARGPV. Alanine 2 carries the post-translational modification N-acetylalanine. Residue serine 3 is modified to Phosphoserine. A UBC core domain is found at 30 to 175; it reads PVGKRLQQEL…LQETYSKQVS (146 aa). Catalysis depends on cysteine 114, which acts as the Glycyl thioester intermediate.

It belongs to the ubiquitin-conjugating enzyme family. In terms of assembly, component of the APC/C complex, composed of at least 14 distinct subunits that assemble into a complex of at least 19 chains with a combined molecular mass of around 1.2 MDa. Within this complex, directly interacts with ANAPC2. Autoubiquitinated by the APC/C complex, leading to its degradation by the proteasome. Its degradation plays a central role in APC/C regulation, allowing cyclin-A accumulation before S phase entry. APC/C substrates inhibit the autoubiquitination of UBE2C/UBCH10 but not its E2 function, hence APC/C remaining active until its substrates have been destroyed.

It carries out the reaction S-ubiquitinyl-[E1 ubiquitin-activating enzyme]-L-cysteine + [E2 ubiquitin-conjugating enzyme]-L-cysteine = [E1 ubiquitin-activating enzyme]-L-cysteine + S-ubiquitinyl-[E2 ubiquitin-conjugating enzyme]-L-cysteine.. It catalyses the reaction S-ubiquitinyl-[E1 ubiquitin-activating enzyme]-L-cysteine + [acceptor protein]-L-lysine = [E1 ubiquitin-activating enzyme]-L-cysteine + N(6)-monoubiquitinyl-[acceptor protein]-L-lysine.. It functions in the pathway protein modification; protein ubiquitination. Functionally, accepts ubiquitin from the E1 complex and catalyzes its covalent attachment to other proteins. In vitro catalyzes 'Lys-11'- and 'Lys-48'-linked polyubiquitination. Acts as an essential factor of the anaphase promoting complex/cyclosome (APC/C), a cell cycle-regulated ubiquitin ligase that controls progression through mitosis. Acts by initiating 'Lys-11'-linked polyubiquitin chains on APC/C substrates, leading to the degradation of APC/C substrates by the proteasome and promoting mitotic exit. This is Ubiquitin-conjugating enzyme E2 C (UBE2C) from Bos taurus (Bovine).